The following is a 1163-amino-acid chain: AF4/FMR2 family member 4 (1163 aa).

Residues 1 to 19 show a composition bias toward basic and acidic residues; the sequence is MNREDRNVLRMKERERRNQ. Disordered regions lie at residues 1–48, 76–312, 324–904, and 1034–1073; these read MNRE…EDKL, AIPK…ASGD, THSW…PRRT, and NSYNNSQAPSPGLGSKAVGMPSPVSPKLSPGNSGNYSSGA. Residues 115 to 128 are compositionally biased toward polar residues; that stretch reads PSTSQSQKRSSGLQ. S120 carries the post-translational modification Phosphoserine. Low complexity-rich tracts occupy residues 129 to 148 and 177 to 194; these read SGHSSQRTSAGSSSGTNSSG and RSSSPGKPQAVSSLNSSH. Residues 198 to 217 show a composition bias toward basic and acidic residues; the sequence is HGNDHHSKEHQRSKSPRDPD. S212 bears the Phosphoserine mark. Composition is skewed to polar residues over residues 227–251, 273–285, and 350–375; these read PFSSGQHSTQSFPPSLMSKSNSMLQ, EHYSSQSHGNSMT, and KESQQSNFGTGEQKRYNPSKTSNGHQ. Phosphoserine is present on residues S387, S388, S389, and S392. Residues 403-412 are compositionally biased toward polar residues; sequence PRSTPGSNSE. Residues 413 to 429 show a composition bias toward basic and acidic residues; it reads PSHHNSEGADNSRDDSS. Positions 430 to 462 are enriched in low complexity; it reads SHSGSESSSGSDSESESSSSDSEANEPSQSASP. 3 positions are modified to phosphoserine: S487, S490, and S491. Polar residues-rich tracts occupy residues 488–501, 510–528, and 549–560; these read PASSVDSNIPSSQG, GTGNSYTDTSGPKETSSAT, and SPAQSDSTTQRR. At S549 the chain carries Phosphoserine. Residues 568-586 show a composition bias toward basic and acidic residues; it reads KKAEKAAAEEPRGGLKIES. A Glycyl lysine isopeptide (Lys-Gly) (interchain with G-Cter in SUMO2) cross-link involves residue K583. Residues 599-612 show a composition bias toward basic residues; that stretch reads SRHKAATKGSRKPN. Residues 613–627 are compositionally biased toward basic and acidic residues; it reads IKKESKSSPRPTAEK. S671 carries the phosphoserine modification. T674 carries the post-translational modification Phosphothreonine. A phosphoserine mark is found at S680, S694, S703, and S706. Residue Y712 is modified to Phosphotyrosine. 3 stretches are compositionally biased toward basic and acidic residues: residues 730–761, 769–789, and 799–811; these read PYKETEPPKGEKKNVPEKHTREAQKQASEKVS, KNEDDNRASESKKPKTEDKNS, and ESSKQSAAKEKDL. S814 is subject to Phosphoserine. Position 822 is an N6-acetyllysine (K822). Phosphoserine occurs at positions 836, 1043, 1055, 1058, and 1062. Residues 836–862 show a composition bias toward low complexity; that stretch reads SQSSSLKSSSNSNKETSGSSKNSSSTS. Residues 1062–1073 are compositionally biased toward low complexity; sequence SPGNSGNYSSGA.

The protein belongs to the AF4 family. Component of the super elongation complex (SEC), at least composed of EAF1, EAF2, CDK9, MLLT3/AF9, AFF (AFF1 or AFF4), the P-TEFb complex and ELL (ELL, ELL2 or ELL3). Interacts with ELL3; the interaction is direct. Interacts with ELL2; the interaction is direct and leads to stabilize ELL2 and prevent ELL2 ubiquitination and degradation. In terms of processing, dephosphorylated at Ser-549 by the PNUTS-PP1 complex, promoting RNA polymerase II transcription pause-release. In terms of tissue distribution, ubiquitously expressed. Strongly expressed in heart, placenta, skeletal muscle, pancreas and to a lower extent in brain.

It localises to the nucleus. The protein localises to the chromosome. Key component of the super elongation complex (SEC), a complex required to increase the catalytic rate of RNA polymerase II transcription by suppressing transient pausing by the polymerase at multiple sites along the DNA. In the SEC complex, AFF4 acts as a central scaffold that recruits other factors through direct interactions with ELL proteins (ELL, ELL2 or ELL3) and the P-TEFb complex. In case of infection by HIV-1 virus, the SEC complex is recruited by the viral Tat protein to stimulate viral gene expression. This is AF4/FMR2 family member 4 (AFF4) from Homo sapiens (Human).